The following is a 596-amino-acid chain: Putative terpene synthase 3, chloroplastic (596 aa).

The N-terminal 46 residues, 1–46 (MATLSMQVSTLSKQVKNLNTFGMGSASKLPMVARRVSTIRLRPICS), are a transit peptide targeting the chloroplast. Residues aspartate 349 and aspartate 353 each coordinate Mn(2+). A DDXXD motif motif is present at residues 349–353 (DDVYD). 2 homodimerization regions span residues 355 to 361 (YGTLDEL) and 427 to 464 (EAKW…FTLP). Residues aspartate 493 and glutamate 501 each coordinate Mn(2+).

The protein belongs to the terpene synthase family. As to quaternary structure, homodimer. Mn(2+) is required as a cofactor. It depends on Mg(2+) as a cofactor.

The protein resides in the plastid. It is found in the chloroplast. It participates in secondary metabolite biosynthesis; terpenoid biosynthesis. Putative monoterpene synthase. The sequence is that of Putative terpene synthase 3, chloroplastic from Thymus vulgaris (Thyme).